Here is a 43-residue protein sequence, read N- to C-terminus: Snake venom metalloproteinase crotalin (43 aa).

The Peptidase M12B domain maps to 1–43 (LLRRKSHDHAQNHDGDKCLRGASLGYYQSFLNQYKPQCILNKP). Position 13 (His-13) interacts with Zn(2+).

This sequence belongs to the venom metalloproteinase (M12B) family. P-I subfamily. Monomer. It depends on Zn(2+) as a cofactor. Post-translationally, this protein autoproteolytically degrades to 10 kDa and 14 kDa fragments in the presence of SDS. Interestingly, the two fragments, as well as reduced crotalin are able to bind vWF, indicating that the binding activity does not require a specific protein conformation. Expressed by the venom gland.

It localises to the secreted. In terms of biological role, snake venom zinc metalloproteinase that inhibits ristocin-induced platelet aggregation by abolishing the binding of von Willebrand factor (vWF) to platelet glycoprotein Ib alpha (GPIBA) through the cleavage of both GP1BA and vWF. Also has fibrinogenolytic activities by degrading the alpha- (FGA) and beta-chain (FGB) of fibrinogen. In vivo, induces a slight hemorrhage when applied to chick chorioallantoic membrane and has potent antithrombic effect. This Crotalus atrox (Western diamondback rattlesnake) protein is Snake venom metalloproteinase crotalin.